Reading from the N-terminus, the 583-residue chain is Inactive carboxylesterase-like protein VdtD (583 aa).

An N-terminal signal peptide occupies residues M1–A23. Residues N84, N109, N221, N265, N307, N350, N388, N448, and N468 are each glycosylated (N-linked (GlcNAc...) asparagine).

Belongs to the type-B carboxylesterase/lipase family.

It functions in the pathway secondary metabolite biosynthesis. Inactive carboxylesterase-like protein; part of the gene cluster that mediates the biosynthesis of viriditoxin, one of the 'classical' secondary metabolites produced by fungi and that has antibacterial activity. The first step is performed by the polyketide synthase VdtA which condenses one acetyl-CoA and 6 malonyl-CoA units to form the heptaketide monomer backbone of viriditoxin. The product of VdtA is then O-methylated on C7 by the O-methyltransferase VdtC. The O-methyl group is important for the stereoselective coupling of the monomers at the final step of viriditoxin biosynthesis. The short-chain dehydrogenase/reductase VdtF then acts as a stereospecific reductase converting the pyrone to dihydropyrone via the reduction of the C3-C4 double bond. The FAD-binding monooxygenase VdtE then converts the ketone group into a methyl-ester group to yield semi-viriditoxin. Finally, the laccase VdtB is involved in dimerization of 2 semi-viriditoxin molecules to yield the final viriditoxin. VdtB is responsible for the regioselective 6,6'-coupling of semi-viriditoxin, which yields (M)-viriditoxin and (P)-viriditoxin at a ratio of 1:2. The non-catalytic carboxylesterase-like protein VdtD affects the stereochemistical outcome of the coupling. The highly reducing polyketide synthase VdtX is not involved in viriditoxin synthesis, but might possibly play a role in the production of additional metabolites not identified yet. The sequence is that of Inactive carboxylesterase-like protein VdtD from Byssochlamys spectabilis (Paecilomyces variotii).